A 176-amino-acid chain; its full sequence is ATP-dependent protease subunit HslV (176 aa).

Residue Thr2 is part of the active site. Positions 157, 160, and 163 each coordinate Na(+).

Belongs to the peptidase T1B family. HslV subfamily. A double ring-shaped homohexamer of HslV is capped on each side by a ring-shaped HslU homohexamer. The assembly of the HslU/HslV complex is dependent on binding of ATP.

Its subcellular location is the cytoplasm. The catalysed reaction is ATP-dependent cleavage of peptide bonds with broad specificity.. Allosterically activated by HslU binding. In terms of biological role, protease subunit of a proteasome-like degradation complex believed to be a general protein degrading machinery. The chain is ATP-dependent protease subunit HslV from Salmonella agona (strain SL483).